We begin with the raw amino-acid sequence, 350 residues long: Probable poly-beta-1,6-N-acetyl-D-glucosamine export protein (350 aa).

The next 10 helical transmembrane spans lie at 7-29 (ELVY…TQIT), 44-66 (FYIR…LLTT), 79-101 (TRVK…SESL), 116-138 (LLGQ…SYII), 145-167 (LFNS…YYFT), 187-204 (IIFG…MGYN), 211-233 (FLER…FIAL), 243-262 (SFSY…ILGI), 269-291 (ILFN…HPII), and 306-328 (TMVF…GMIL).

It belongs to the acyltransferase 3 family.

The protein resides in the cell membrane. Presumably involved in the export of the biofilm adhesin polysaccharide poly-beta-1,6-N-acetyl-D-glucosamine (PNAG, also referred to as PIA) across the cell membrane. This Staphylococcus aureus (strain Mu50 / ATCC 700699) protein is Probable poly-beta-1,6-N-acetyl-D-glucosamine export protein (icaC).